A 163-amino-acid polypeptide reads, in one-letter code: Ankyrin repeat domain-containing protein 37 (163 aa).

ANK repeat units follow at residues 29-58, 62-91, and 95-124; these read LGQS…DVNQ, FGEA…RIDM, and DGHT…TQDT. A Nuclear localization signal motif is present at residues 129 to 149; the sequence is QSSLHNLKETAAGVKRGQCCQ.

The protein resides in the nucleus. Its subcellular location is the cytoplasm. The chain is Ankyrin repeat domain-containing protein 37 (ankrd37) from Xenopus tropicalis (Western clawed frog).